Reading from the N-terminus, the 316-residue chain is MAPRCLLIGTPSIAAHPERLDQVYEIHHRSSTDLQMLDRIAAGLVNLPAATYDVVLLLADADGTTRESHKLFSRDVMNKVASALKIGGVLKSQAGPFQGAEKTEAILAGLTETEDGMAKPEQEEPVSIPLKFGKNKANGVSATNGTNGAVNPDGSVPLNLNRKRDQPEPVKPAGVGFVDFSDDLDDPIITGEDDDLIDEDDLITEADMARPVVQPLECQPKPGKRRRACKDCTCGMKEKLEAEDAAKRSSADKALNSLKLDADDLAEVDFTVQGKVGSCGNCALGDAFRCDGCPYIGLPAFKPGEEVRLLNNDIQL.

The tract at residues Met1–Ile128 is N-terminal SAM-like domain. Positions Pro129 to Met208 are linker. Residues Ser141–Phe177 are disordered. [2Fe-2S] cluster is bound by residues Cys218, Cys229, Cys232, and Cys234. The segment at Cys218–Cys234 is fe-S binding site A. [4Fe-4S] cluster is bound by residues Cys279, Cys282, Cys290, and Cys293. 2 short sequence motifs (cx2C motif) span residues Cys279 to Cys282 and Cys290 to Cys293. The fe-S binding site B stretch occupies residues Cys279–Cys293.

Belongs to the anamorsin family. In terms of assembly, monomer. Interacts with TAH18. Interacts with MIA40. Requires [2Fe-2S] cluster as cofactor. [4Fe-4S] cluster serves as cofactor.

It is found in the cytoplasm. Its subcellular location is the mitochondrion intermembrane space. Functionally, component of the cytosolic iron-sulfur (Fe-S) protein assembly (CIA) machinery required for the maturation of extramitochondrial Fe-S proteins. Part of an electron transfer chain functioning in an early step of cytosolic Fe-S biogenesis, facilitating the de novo assembly of a [4Fe-4S] cluster on the scaffold complex CFD1-NBP35. Electrons are transferred to DRE2 from NADPH via the FAD- and FMN-containing protein TAH18. TAH18-DRE2 are also required for the assembly of the diferric tyrosyl radical cofactor of ribonucleotide reductase (RNR), probably by providing electrons for reduction during radical cofactor maturation in the catalytic small subunit RNR2. This chain is Fe-S cluster assembly protein dre2, found in Pyrenophora tritici-repentis (strain Pt-1C-BFP) (Wheat tan spot fungus).